A 286-amino-acid polypeptide reads, in one-letter code: NFU1 iron-sulfur cluster scaffold homolog, mitochondrial (286 aa).

A mitochondrion-targeting transit peptide spans 1–66; it reads MSKLLTNTAL…RQIQLSGARN (66 aa). The nifU stretch occupies residues 182–250; sequence IKELLDTRIR…IPEVESVEQV (69 aa). Residues Cys219 and Cys222 each coordinate [4Fe-4S] cluster.

This sequence belongs to the NifU family.

It is found in the mitochondrion. Molecular scaffold for [Fe-S] cluster assembly of mitochondrial iron-sulfur proteins. The chain is NFU1 iron-sulfur cluster scaffold homolog, mitochondrial from Drosophila ananassae (Fruit fly).